Consider the following 149-residue polypeptide: CCAAT/enhancer-binding protein gamma (149 aa).

Residues 1 to 12 (MSKVSQQNSTPG) are compositionally biased toward polar residues. The interval 1–92 (MSKVSQQNST…SKQKAQDTLQ (92 aa)) is disordered. K3 participates in a covalent cross-link: Glycyl lysine isopeptide (Lys-Gly) (interchain with G-Cter in SUMO2). Low complexity predominate over residues 28–37 (LQQVPQLVPA). Positions 56–72 (SPMDRNSDEYRQRRERN) are enriched in basic and acidic residues. In terms of domain architecture, bZIP spans 62–125 (SDEYRQRRER…SVLKDLFLEH (64 aa)). The interval 66–93 (RQRRERNNMAVKKSRLKSKQKAQDTLQR) is basic motif. Positions 97–118 (LKEENERLEAKIKLLTKELSVL) are leucine-zipper. Residues 128-149 (NLADNVQPSSTENTTNPDKAGQ) form a disordered region. Positions 131–149 (DNVQPSSTENTTNPDKAGQ) are enriched in polar residues.

The protein belongs to the bZIP family. C/EBP subfamily. In terms of assembly, binds DNA as a dimer and can form stable heterodimers with CEBPA and CEBPB. Interacts with ZNF638; this interaction increases transcriptional activation.

The protein localises to the nucleus. Functionally, transcription factor that binds to the promoter and the enhancer regions of target genes. Binds to the enhancer element PRE-I (positive regulatory element-I) of the IL-4 gene. Binds to the promoter and the enhancer of the immunoglobulin heavy chain. Binds to GPE1, a cis-acting element in the G-CSF gene promoter. This is CCAAT/enhancer-binding protein gamma (CEBPG) from Bos taurus (Bovine).